Consider the following 842-residue polypeptide: MAKKKIKRRGKMPPNIFDTGGQSWGQQSSGQFSNAFKGENLGNSIGSIGGAVGGIAQAGISNAQIADTSGIEAQNKAQKNMVVGASSNDDLMSEWGSWNKVKDDYSWKDVRGGSTGQRVTNTIGAAGQGAAAGASVGGPIGAIVGGVVGLGSAIGGWLGGNRKAKRKAKKLNKEAKEANERALTSFETRADNIDTQNDFNMLANFSAYGGPLEFGSGAIGYEFDNRYLNNQEMSAVAKQRLTSLPNSFQALPEMNTYNAFAEGGGLSREKNYGSKKKPYPSVPSGDFAGPHRSYPIPTKADARDALRLAGLHGNESVRRKVLAKYPSLKAFGGSLFDSVVGNNFNQSFTQGIQGMFQQEPEQTVQAANIAKDGGDIKIKEKNKGKFTAYCGGKVTEACIRKGKNSSNPTTRKRATFAQNARNWNAFGGWLNTQGGDFTNGVTFINEGGSHEENPYQGIQIGVDPEGAPNLVEQGEVVYDDYVFSDRMEIPDDIRKEYKLRGKTFAKAAKSAQRESEERPNDPLSTKGLQAAMERIATAQEEARQRKEAHREGNEYPSMFAYGGDTNPYGLALEDPMSVEELEALMVQSGETGEIAPEGNNGNRQTWTRYAPIIGSGLASLSDLFSKPDYDSADLISGVDLGAEAVGYAPIGNYLSYRPLDRDFYINKMNQQAAATRRGLMNTSGGNRLNAQAGILAADYNYGQNMGNLARQAEEYNQQLRERVEAFNRGTNMFNTETGLKASMFNAESRNAAKRARLGQATTVAQLRQGIKDQDAARRSANITNFLQGLGDMGWENEQANWLDTLAKSGVLKMNTKGEYTGGTKKAKGGKVRTKKKKGLTYG.

Basic residues predominate over residues 1–11 (MAKKKIKRRGK). The interval 1–29 (MAKKKIKRRGKMPPNIFDTGGQSWGQQSS) is disordered. The segment covering 20 to 29 (GGQSWGQQSS) has biased composition (low complexity). The helical transmembrane segment at 140-160 (IGAIVGGVVGLGSAIGGWLGG) threads the bilayer. An interaction with the portal protein region spans residues 425–552 (AFGGWLNTQG…RQRKEAHREG (128 aa)). A disordered region spans residues 817–842 (GEYTGGTKKAKGGKVRTKKKKGLTYG). The segment covering 824–842 (KKAKGGKVRTKKKKGLTYG) has biased composition (basic residues).

In terms of assembly, homododecamer. Interacts with the portal protein.

The protein resides in the virion. The protein localises to the host membrane. Its function is as follows. Protein that is stored in high quantity in the viral capsid and may play a role during ejection. The sequence is that of Cargo protein 1 from Bacteroides phage crAss001 (Bacteroides phage PhiCrAss001).